The chain runs to 268 residues: Fc receptor-like protein 6 (268 aa).

A signal peptide spans 1–16 (MLLWMVLLLCESMAEA). Over 17–215 (QELFPNPELT…TAWIKSNMLP (199 aa)) the chain is Extracellular. Residues 114–194 (PVLTLQHEAT…AKNNISREIS (81 aa)) form the Ig-like C2-type domain. A disulfide bridge links C135 with C183. N180 and N188 each carry an N-linked (GlcNAc...) asparagine glycan. Residues 216-236 (IWLPASLLGGMVIAAVVLMYF) form a helical membrane-spanning segment. Residues 237–268 (FKPCKKHARPETPTLKEPDSFLYVSVDNQRYK) are Cytoplasmic-facing.

Interacts with class II MHC.

Its subcellular location is the cell membrane. Its function is as follows. Acts as a MHC class II receptor. When stimulated on its own, does not play a role in cytokine production or the release of cytotoxic granules by NK cells and cytotoxic CD8(+) T cells. Does not act as an Fc receptor. The sequence is that of Fc receptor-like protein 6 (Fcrl6) from Mus musculus (Mouse).